The sequence spans 123 residues: Small ribosomal subunit protein uS12 (123 aa).

Residue D89 is modified to 3-methylthioaspartic acid. Positions 104 to 123 (TQGVKDRRQRRSKYGAKRPK) are disordered. Basic residues predominate over residues 110–123 (RRQRRSKYGAKRPK).

It belongs to the universal ribosomal protein uS12 family. As to quaternary structure, part of the 30S ribosomal subunit. Contacts proteins S8 and S17. May interact with IF1 in the 30S initiation complex.

Functionally, with S4 and S5 plays an important role in translational accuracy. Interacts with and stabilizes bases of the 16S rRNA that are involved in tRNA selection in the A site and with the mRNA backbone. Located at the interface of the 30S and 50S subunits, it traverses the body of the 30S subunit contacting proteins on the other side and probably holding the rRNA structure together. The combined cluster of proteins S8, S12 and S17 appears to hold together the shoulder and platform of the 30S subunit. In Rhodospirillum rubrum (strain ATCC 11170 / ATH 1.1.1 / DSM 467 / LMG 4362 / NCIMB 8255 / S1), this protein is Small ribosomal subunit protein uS12.